The following is a 370-amino-acid chain: Glucan endo-1,3-beta-glucosidase, basic vacuolar isoform GLB (370 aa).

The first 32 residues, 1-32 (MSTSDKHNTPQMAAITLLGLLLVASTIEIAGA), serve as a signal peptide directing secretion. Gln-33 carries the pyrrolidone carboxylic acid modification. The Proton donor role is filled by Glu-128. Glu-273 acts as the Nucleophile in catalysis. A propeptide spans 349–370 (VSGGVWDSSVETNATASLISEM) (removed in mature form). Residue Asn-361 is glycosylated (N-linked (GlcNAc...) asparagine).

The protein belongs to the glycosyl hydrolase 17 family. Is expressed primarily in epidermal cell of healthy plant, and following induction by ethylene, accumulates in mesophyll cells.

It localises to the vacuole. It carries out the reaction Hydrolysis of (1-&gt;3)-beta-D-glucosidic linkages in (1-&gt;3)-beta-D-glucans.. Its function is as follows. Implicated in the defense of plants against pathogens. In Nicotiana tabacum (Common tobacco), this protein is Glucan endo-1,3-beta-glucosidase, basic vacuolar isoform GLB.